Consider the following 183-residue polypeptide: ATP synthase subunit delta (183 aa).

Belongs to the ATPase delta chain family. In terms of assembly, F-type ATPases have 2 components, F(1) - the catalytic core - and F(0) - the membrane proton channel. F(1) has five subunits: alpha(3), beta(3), gamma(1), delta(1), epsilon(1). F(0) has three main subunits: a(1), b(2) and c(10-14). The alpha and beta chains form an alternating ring which encloses part of the gamma chain. F(1) is attached to F(0) by a central stalk formed by the gamma and epsilon chains, while a peripheral stalk is formed by the delta and b chains.

Its subcellular location is the cell inner membrane. Its function is as follows. F(1)F(0) ATP synthase produces ATP from ADP in the presence of a proton or sodium gradient. F-type ATPases consist of two structural domains, F(1) containing the extramembraneous catalytic core and F(0) containing the membrane proton channel, linked together by a central stalk and a peripheral stalk. During catalysis, ATP synthesis in the catalytic domain of F(1) is coupled via a rotary mechanism of the central stalk subunits to proton translocation. Functionally, this protein is part of the stalk that links CF(0) to CF(1). It either transmits conformational changes from CF(0) to CF(1) or is implicated in proton conduction. This Nitratidesulfovibrio vulgaris (strain DSM 19637 / Miyazaki F) (Desulfovibrio vulgaris) protein is ATP synthase subunit delta.